A 518-amino-acid chain; its full sequence is Cytochrome P450 monooxygenase ARMGADRAFT_1018417 (518 aa).

Residues 3 to 23 traverse the membrane as a helical segment; the sequence is LFSAYALAFSLLMIPLILYIL. Cys433 serves as a coordination point for heme. N-linked (GlcNAc...) asparagine glycosylation is present at Asn455.

It belongs to the cytochrome P450 family. Heme is required as a cofactor.

The protein resides in the membrane. It functions in the pathway secondary metabolite biosynthesis. Functionally, cytochrome P450 monooxygenase, part of the gene cluster that mediates the biosynthesis of melleolides, a range of antifungal and phytotoxic polyketide derivatives composed of an orsellinic acid (OA) moiety esterified to various sesquiterpene alcohols. The first step in melleolides biosynthesis is performed by the delta(6)-protoilludene synthase PRO1 which catalyzes the cyclization of farnesyl diphosphate to protoilludene. The orsellinic acid synthase armB produces OA by condensing acetyl-CoA with 3 malonyl-CoA units in a three-round chain elongation reaction folowed by a C2-C7 ring closure. ArmB further catalyzes the trans-esterification of OA to the various sesquiterpene alcohols resulting from the hydroxylation of protoilludene. The melleolides cluster also includes 5 cytochrome P450 monooxygenases, 4 NAD(+)-dependent oxidoreductases, one flavin-dependent oxidoreductase, and one O-methyltransferase. The cytochrome P450 monooxygenases may be involved in protoilludene hydroxylation to elaborate melleolides with multiple alcohol groups, such as melleolide D, which carries alcohol functionalities at C-4, C-5, C-10, and C-13. The role of the NAD(+)-dependent enzymes remains unknown. Numerous melleolides, including arnamial, show 5'-O-methylation of the aromatic moiety which may be catalyzed by the methyltransferase encoded in the cluster. The flavin-dependent oxidoreductase might represent the dehydrogenase yielding the aldehyde in position 1 of arnamial and other melleolides. Finally, several halogenase localized outside of the cluster, are able to catalyze the transfer of a single chlorine atom to the melleolide backbone, resulting in a 6'-chloromelleolide product. The sequence is that of Cytochrome P450 monooxygenase ARMGADRAFT_1018417 from Armillaria gallica (Bulbous honey fungus).